The sequence spans 253 residues: Triosephosphate isomerase (253 aa).

Positions 12 and 14 each coordinate substrate. His-96 acts as the Electrophile in catalysis. The active-site Proton acceptor is the Glu-169.

Belongs to the triosephosphate isomerase family. In terms of assembly, homodimer.

The protein localises to the cytoplasm. The catalysed reaction is D-glyceraldehyde 3-phosphate = dihydroxyacetone phosphate. Its pathway is carbohydrate biosynthesis; gluconeogenesis. It participates in carbohydrate degradation; glycolysis; D-glyceraldehyde 3-phosphate from glycerone phosphate: step 1/1. In terms of biological role, antigen to the host M.1 monoclonal antibody. The protein is Triosephosphate isomerase (TPI) of Schistosoma mansoni (Blood fluke).